The primary structure comprises 156 residues: Large ribosomal subunit protein uL15 (156 aa).

Positions 14–35 (GSRTHGWGRVGQHRKSGSSGGK) are disordered.

Belongs to the universal ribosomal protein uL15 family. Part of the 50S ribosomal subunit.

Binds to the 23S rRNA. The chain is Large ribosomal subunit protein uL15 from Pyrobaculum islandicum (strain DSM 4184 / JCM 9189 / GEO3).